The chain runs to 316 residues: Lipoyl synthase (316 aa).

Residues 1–15 are compositionally biased toward basic and acidic residues; it reads MKARNESMSKGEYKT. The tract at residues 1 to 33 is disordered; sequence MKARNESMSKGEYKTKSLKNRPDPTQPKLKKPS. 7 residues coordinate [4Fe-4S] cluster: C64, C69, C75, C90, C94, C97, and S304. Positions 76 to 293 constitute a Radical SAM core domain; that stretch reads FGHGTATFMI…EQAGMEMGFT (218 aa).

This sequence belongs to the radical SAM superfamily. Lipoyl synthase family. [4Fe-4S] cluster is required as a cofactor.

It is found in the cytoplasm. It catalyses the reaction [[Fe-S] cluster scaffold protein carrying a second [4Fe-4S](2+) cluster] + N(6)-octanoyl-L-lysyl-[protein] + 2 oxidized [2Fe-2S]-[ferredoxin] + 2 S-adenosyl-L-methionine + 4 H(+) = [[Fe-S] cluster scaffold protein] + N(6)-[(R)-dihydrolipoyl]-L-lysyl-[protein] + 4 Fe(3+) + 2 hydrogen sulfide + 2 5'-deoxyadenosine + 2 L-methionine + 2 reduced [2Fe-2S]-[ferredoxin]. The protein operates within protein modification; protein lipoylation via endogenous pathway; protein N(6)-(lipoyl)lysine from octanoyl-[acyl-carrier-protein]: step 2/2. Its function is as follows. Catalyzes the radical-mediated insertion of two sulfur atoms into the C-6 and C-8 positions of the octanoyl moiety bound to the lipoyl domains of lipoate-dependent enzymes, thereby converting the octanoylated domains into lipoylated derivatives. The sequence is that of Lipoyl synthase from Hydrogenovibrio crunogenus (strain DSM 25203 / XCL-2) (Thiomicrospira crunogena).